A 558-amino-acid polypeptide reads, in one-letter code: Potassium-transporting ATPase potassium-binding subunit (558 aa).

12 helical membrane passes run 2-22 (LQGF…APLL), 66-86 (VSAA…ILMF), 135-155 (ALGF…IAFI), 177-197 (ILLP…VPET), 253-273 (LLET…YGIM), 280-300 (GWLI…IAAV), 327-347 (FGWV…CGAV), 354-374 (LMPP…IWGG), 378-398 (GTAY…LMVG), 413-433 (IVLA…PTAI), 482-502 (LSAS…LIFL), and 528-548 (GITA…ILVL).

This sequence belongs to the KdpA family. As to quaternary structure, the system is composed of three essential subunits: KdpA, KdpB and KdpC.

The protein localises to the cell inner membrane. In terms of biological role, part of the high-affinity ATP-driven potassium transport (or Kdp) system, which catalyzes the hydrolysis of ATP coupled with the electrogenic transport of potassium into the cytoplasm. This subunit binds the periplasmic potassium ions and delivers the ions to the membrane domain of KdpB through an intramembrane tunnel. This Synechocystis sp. (strain ATCC 27184 / PCC 6803 / Kazusa) protein is Potassium-transporting ATPase potassium-binding subunit.